Reading from the N-terminus, the 250-residue chain is Large ribosomal subunit protein uL30B (250 aa).

The protein belongs to the universal ribosomal protein uL30 family. Component of the large ribosomal subunit (LSU). Mature yeast ribosomes consist of a small (40S) and a large (60S) subunit. The 40S small subunit contains 1 molecule of ribosomal RNA (18S rRNA) and at least 33 different proteins. The large 60S subunit contains 3 rRNA molecules (25S, 5.8S and 5S rRNA) and at least 46 different proteins.

The protein localises to the cytoplasm. It localises to the nucleus. Its subcellular location is the nucleolus. Component of the ribosome, a large ribonucleoprotein complex responsible for the synthesis of proteins in the cell. The small ribosomal subunit (SSU) binds messenger RNAs (mRNAs) and translates the encoded message by selecting cognate aminoacyl-transfer RNA (tRNA) molecules. The large subunit (LSU) contains the ribosomal catalytic site termed the peptidyl transferase center (PTC), which catalyzes the formation of peptide bonds, thereby polymerizing the amino acids delivered by tRNAs into a polypeptide chain. The nascent polypeptides leave the ribosome through a tunnel in the LSU and interact with protein factors that function in enzymatic processing, targeting, and the membrane insertion of nascent chains at the exit of the ribosomal tunnel. The polypeptide is Large ribosomal subunit protein uL30B (rpl702) (Schizosaccharomyces pombe (strain 972 / ATCC 24843) (Fission yeast)).